The chain runs to 204 residues: Molybdenum cofactor guanylyltransferase (204 aa).

GTP contacts are provided by residues 10 to 12 (LAG), K23, N51, D69, and D99. A Mg(2+)-binding site is contributed by D99.

Belongs to the MobA family. As to quaternary structure, monomer. Mg(2+) serves as cofactor.

It is found in the cytoplasm. The enzyme catalyses Mo-molybdopterin + GTP + H(+) = Mo-molybdopterin guanine dinucleotide + diphosphate. Its function is as follows. Transfers a GMP moiety from GTP to Mo-molybdopterin (Mo-MPT) cofactor (Moco or molybdenum cofactor) to form Mo-molybdopterin guanine dinucleotide (Mo-MGD) cofactor. The protein is Molybdenum cofactor guanylyltransferase of Shewanella piezotolerans (strain WP3 / JCM 13877).